We begin with the raw amino-acid sequence, 512 residues long: Probable cytosol aminopeptidase (512 aa).

Residues K281 and D286 each coordinate Mn(2+). The active site involves K293. The Mn(2+) site is built by D304, D363, and E365. R367 is an active-site residue.

Belongs to the peptidase M17 family. Mn(2+) is required as a cofactor.

It localises to the cytoplasm. It catalyses the reaction Release of an N-terminal amino acid, Xaa-|-Yaa-, in which Xaa is preferably Leu, but may be other amino acids including Pro although not Arg or Lys, and Yaa may be Pro. Amino acid amides and methyl esters are also readily hydrolyzed, but rates on arylamides are exceedingly low.. The enzyme catalyses Release of an N-terminal amino acid, preferentially leucine, but not glutamic or aspartic acids.. In terms of biological role, presumably involved in the processing and regular turnover of intracellular proteins. Catalyzes the removal of unsubstituted N-terminal amino acids from various peptides. The sequence is that of Probable cytosol aminopeptidase from Koribacter versatilis (strain Ellin345).